Consider the following 342-residue polypeptide: UDP-3-O-acylglucosamine N-acyltransferase (342 aa).

Catalysis depends on H234, which acts as the Proton acceptor.

The protein belongs to the transferase hexapeptide repeat family. LpxD subfamily. Homotrimer.

It catalyses the reaction a UDP-3-O-[(3R)-3-hydroxyacyl]-alpha-D-glucosamine + a (3R)-hydroxyacyl-[ACP] = a UDP-2-N,3-O-bis[(3R)-3-hydroxyacyl]-alpha-D-glucosamine + holo-[ACP] + H(+). It participates in bacterial outer membrane biogenesis; LPS lipid A biosynthesis. Catalyzes the N-acylation of UDP-3-O-acylglucosamine using 3-hydroxyacyl-ACP as the acyl donor. Is involved in the biosynthesis of lipid A, a phosphorylated glycolipid that anchors the lipopolysaccharide to the outer membrane of the cell. The chain is UDP-3-O-acylglucosamine N-acyltransferase from Oleidesulfovibrio alaskensis (strain ATCC BAA-1058 / DSM 17464 / G20) (Desulfovibrio alaskensis).